Consider the following 98-residue polypeptide: Acylphosphatase (98 aa).

The Acylphosphatase-like domain occupies 12 to 98 (TYYVRVRGVV…DKRFERFQQH (87 aa)). Catalysis depends on residues Arg27 and Asn45.

The protein belongs to the acylphosphatase family.

The catalysed reaction is an acyl phosphate + H2O = a carboxylate + phosphate + H(+). This Burkholderia mallei (strain NCTC 10247) protein is Acylphosphatase (acyP).